The primary structure comprises 432 residues: Adenylosuccinate synthetase (432 aa).

Residues 12–18 and 40–42 contribute to the GTP site; these read GDEGKGK and GHT. Asp13 acts as the Proton acceptor in catalysis. Mg(2+)-binding residues include Asp13 and Gly40. IMP contacts are provided by residues 13-16, 38-41, Thr129, Arg143, Gln224, Thr239, and Arg303; these read DEGK and NAGH. The active-site Proton donor is His41. 299-305 contacts substrate; sequence VTTGRRR. Residues Arg305, 331–333, and 413–415 contribute to the GTP site; these read KLD and GVG.

The protein belongs to the adenylosuccinate synthetase family. Homodimer. Mg(2+) serves as cofactor.

The protein resides in the cytoplasm. It catalyses the reaction IMP + L-aspartate + GTP = N(6)-(1,2-dicarboxyethyl)-AMP + GDP + phosphate + 2 H(+). Its pathway is purine metabolism; AMP biosynthesis via de novo pathway; AMP from IMP: step 1/2. In terms of biological role, plays an important role in the de novo pathway of purine nucleotide biosynthesis. Catalyzes the first committed step in the biosynthesis of AMP from IMP. This chain is Adenylosuccinate synthetase, found in Mycobacterium avium (strain 104).